The chain runs to 246 residues: Probable transcriptional regulatory protein ORF2U (246 aa).

Belongs to the TACO1 family.

Its subcellular location is the cytoplasm. The chain is Probable transcriptional regulatory protein ORF2U from Hathewaya histolytica (Clostridium histolyticum).